Consider the following 628-residue polypeptide: tRNA uridine 5-carboxymethylaminomethyl modification enzyme MnmG (628 aa).

FAD is bound by residues 14 to 19 (GAGHAG), Val-126, and Ser-181. 273-287 (GPRYCPSIEDKVVRF) is an NAD(+) binding site. Position 370 (Gln-370) interacts with FAD.

Belongs to the MnmG family. Homodimer. Heterotetramer of two MnmE and two MnmG subunits. Requires FAD as cofactor.

The protein resides in the cytoplasm. NAD-binding protein involved in the addition of a carboxymethylaminomethyl (cmnm) group at the wobble position (U34) of certain tRNAs, forming tRNA-cmnm(5)s(2)U34. The chain is tRNA uridine 5-carboxymethylaminomethyl modification enzyme MnmG from Pelobacter propionicus (strain DSM 2379 / NBRC 103807 / OttBd1).